Here is a 95-residue protein sequence, read N- to C-terminus: Integration host factor subunit beta (95 aa).

Positions 56–76 (RAPRTGRNPKTGTSVELDGKY) are disordered.

This sequence belongs to the bacterial histone-like protein family. Heterodimer of an alpha and a beta chain.

Functionally, this protein is one of the two subunits of integration host factor, a specific DNA-binding protein that functions in genetic recombination as well as in transcriptional and translational control. This is Integration host factor subunit beta from Shewanella woodyi (strain ATCC 51908 / MS32).